The following is a 152-amino-acid chain: Acidic phospholipase A2 homolog taipoxin gamma chain (152 aa).

Positions 1-19 (MHPAHLLVLLAVCVSLLGS) are cleaved as a signal peptide. Cystine bridges form between cysteine 38-cysteine 104, cysteine 42-cysteine 46, cysteine 54-cysteine 151, cysteine 56-cysteine 72, cysteine 71-cysteine 132, cysteine 78-cysteine 125, cysteine 88-cysteine 118, and cysteine 111-cysteine 123. The N-linked (GlcNAc...) asparagine glycan is linked to asparagine 97.

It belongs to the phospholipase A2 family. Group I subfamily. D49 sub-subfamily. Heterotrimer of alpha, beta, and gamma chains; non-covalently linked. Contains 0.9% fucose, 2.2% mannose, 4.2% N-acetyl-D-glucosamine, 3.5% galactose, and 3.8% N-acetyl-neuraminic acid (sialic acid). As to expression, expressed by the venom gland.

The protein resides in the secreted. Heterotrimer: Snake venom phospholipase A2 (PLA2) heterotrimer that acts as a potent presynaptic neurotoxin by blocking synaptic transmission and synaptic vesicle recycling. May act by binding in a calcium-dependent fashion to neurotonal pentraxin-1 (NPTX1) and neurotonal pentraxin-2 (NPTX2), but not to neuronal pentraxin receptor (NPTXR). Also binds to taipoxin-associated calcium binding protein 49 (RCN2), a protein localized in the lumen of endoplasmic reticulum. Functionally, monomer (gamma chain): Snake venom phospholipase A2 homolog that is neither toxic nor enzymatically active. Does not bind calcium. The polypeptide is Acidic phospholipase A2 homolog taipoxin gamma chain (Oxyuranus scutellatus scutellatus (Australian taipan)).